The following is a 429-amino-acid chain: Ribosomal protein uS12 methylthiotransferase RimO (429 aa).

The 117-residue stretch at 2 to 118 (HNIFLLSLGC…VLRAIGAEYR (117 aa)) folds into the MTTase N-terminal domain. 6 residues coordinate [4Fe-4S] cluster: Cys-11, Cys-47, Cys-81, Cys-142, Cys-146, and Cys-149. In terms of domain architecture, Radical SAM core spans 128–357 (LTPPHYAFLK…MELQETISQE (230 aa)). A TRAM domain is found at 360–427 (REFEGNEIVV…PYDLEGEVIG (68 aa)).

It belongs to the methylthiotransferase family. RimO subfamily. The cofactor is [4Fe-4S] cluster.

It localises to the cytoplasm. The catalysed reaction is L-aspartate(89)-[ribosomal protein uS12]-hydrogen + (sulfur carrier)-SH + AH2 + 2 S-adenosyl-L-methionine = 3-methylsulfanyl-L-aspartate(89)-[ribosomal protein uS12]-hydrogen + (sulfur carrier)-H + 5'-deoxyadenosine + L-methionine + A + S-adenosyl-L-homocysteine + 2 H(+). Catalyzes the methylthiolation of an aspartic acid residue of ribosomal protein uS12. The polypeptide is Ribosomal protein uS12 methylthiotransferase RimO (Chlorobium limicola (strain DSM 245 / NBRC 103803 / 6330)).